We begin with the raw amino-acid sequence, 260 residues long: Indole-3-glycerol phosphate synthase (260 aa).

Belongs to the TrpC family.

It carries out the reaction 1-(2-carboxyphenylamino)-1-deoxy-D-ribulose 5-phosphate + H(+) = (1S,2R)-1-C-(indol-3-yl)glycerol 3-phosphate + CO2 + H2O. The protein operates within amino-acid biosynthesis; L-tryptophan biosynthesis; L-tryptophan from chorismate: step 4/5. This is Indole-3-glycerol phosphate synthase from Acetivibrio thermocellus (strain ATCC 27405 / DSM 1237 / JCM 9322 / NBRC 103400 / NCIMB 10682 / NRRL B-4536 / VPI 7372) (Clostridium thermocellum).